We begin with the raw amino-acid sequence, 20 residues long: U27-ctenitoxin-Pn1a (20 aa).

The tract at residues 1-20 (LAKRADICQPGKTSQRACET) is disordered. Positions 11 to 20 (GKTSQRACET) are enriched in polar residues.

Post-translationally, contains 4 disulfide bonds. As to expression, expressed by the venom gland.

It is found in the secreted. Functionally, has a vascular smooth muscle contracting activity. Causes short-lived contractions of both arterial and venous rabbit vessels. The polypeptide is U27-ctenitoxin-Pn1a (Phoneutria nigriventer (Brazilian armed spider)).